Reading from the N-terminus, the 333-residue chain is Probable endo-beta-1,4-glucanase B (333 aa).

Positions 1–17 are cleaved as a signal peptide; that stretch reads MKFRNLFFAAVAGSAVA. Asn37 and Asn100 each carry an N-linked (GlcNAc...) asparagine glycan. The Proton donor role is filled by Glu160. The active-site Nucleophile is Glu267.

Belongs to the glycosyl hydrolase 5 (cellulase A) family.

The protein localises to the secreted. The enzyme catalyses Endohydrolysis of (1-&gt;4)-beta-D-glucosidic linkages in cellulose, lichenin and cereal beta-D-glucans.. Functionally, has endoglucanase activity on substrates containing beta-1,4 glycosidic bonds, like in carboxymethylcellulose (CMC), hydroxyethylcellulose (HEC) and beta-glucan. Involved in the degradation of complex natural cellulosic substrates. The protein is Probable endo-beta-1,4-glucanase B (eglB) of Aspergillus oryzae (strain ATCC 42149 / RIB 40) (Yellow koji mold).